The sequence spans 103 residues: Small ribosomal subunit protein uS10 (103 aa).

The protein belongs to the universal ribosomal protein uS10 family. Part of the 30S ribosomal subunit.

Functionally, involved in the binding of tRNA to the ribosomes. The sequence is that of Small ribosomal subunit protein uS10 from Verminephrobacter eiseniae (strain EF01-2).